The primary structure comprises 294 residues: Phosphatidylserine decarboxylase proenzyme (294 aa).

Catalysis depends on charge relay system; for autoendoproteolytic cleavage activity residues D100, H157, and S261. Catalysis depends on S261, which acts as the Schiff-base intermediate with substrate; via pyruvic acid; for decarboxylase activity. S261 carries the pyruvic acid (Ser); by autocatalysis modification.

Belongs to the phosphatidylserine decarboxylase family. PSD-B subfamily. Prokaryotic type I sub-subfamily. Heterodimer of a large membrane-associated beta subunit and a small pyruvoyl-containing alpha subunit. Requires pyruvate as cofactor. In terms of processing, is synthesized initially as an inactive proenzyme. Formation of the active enzyme involves a self-maturation process in which the active site pyruvoyl group is generated from an internal serine residue via an autocatalytic post-translational modification. Two non-identical subunits are generated from the proenzyme in this reaction, and the pyruvate is formed at the N-terminus of the alpha chain, which is derived from the carboxyl end of the proenzyme. The autoendoproteolytic cleavage occurs by a canonical serine protease mechanism, in which the side chain hydroxyl group of the serine supplies its oxygen atom to form the C-terminus of the beta chain, while the remainder of the serine residue undergoes an oxidative deamination to produce ammonia and the pyruvoyl prosthetic group on the alpha chain. During this reaction, the Ser that is part of the protease active site of the proenzyme becomes the pyruvoyl prosthetic group, which constitutes an essential element of the active site of the mature decarboxylase.

The protein localises to the cell membrane. The catalysed reaction is a 1,2-diacyl-sn-glycero-3-phospho-L-serine + H(+) = a 1,2-diacyl-sn-glycero-3-phosphoethanolamine + CO2. It participates in phospholipid metabolism; phosphatidylethanolamine biosynthesis; phosphatidylethanolamine from CDP-diacylglycerol: step 2/2. In terms of biological role, catalyzes the formation of phosphatidylethanolamine (PtdEtn) from phosphatidylserine (PtdSer). The sequence is that of Phosphatidylserine decarboxylase proenzyme from Mannheimia succiniciproducens (strain KCTC 0769BP / MBEL55E).